We begin with the raw amino-acid sequence, 380 residues long: uncharacterized protein (380 aa).

A signal peptide spans 1–28; the sequence is MQFLSDTQRMVLSRAVCASFFFFHVAVA. The region spanning 307–380 is the SPOR domain; sequence AGDEKPRGYQ…DAGYETFPLF (74 aa).

This is an uncharacterized protein from Treponema pallidum (strain Nichols).